The sequence spans 249 residues: Precorrin-4 C(11)-methyltransferase (249 aa).

It belongs to the precorrin methyltransferase family.

It catalyses the reaction precorrin-4 + S-adenosyl-L-methionine = precorrin-5 + S-adenosyl-L-homocysteine. It participates in cofactor biosynthesis; adenosylcobalamin biosynthesis; cob(II)yrinate a,c-diamide from precorrin-2 (aerobic route): step 4/10. Its function is as follows. Catalyzes the methylation of C-11 in precorrin-4 to form precorrin-5. The chain is Precorrin-4 C(11)-methyltransferase (cobM) from Rhodococcus erythropolis (Arthrobacter picolinophilus).